Here is a 472-residue protein sequence, read N- to C-terminus: MRDVKKRKIAHEAPEHGSDTESTSSHKSVAQQDDPLETQDEATATESRPAPKSFKDLGIIDQLCEACETMGYKAPTPIQAESIPLALQGRDLIGLAETGSGKTAAFALPILQALMENPQSFFGLILAPTRELAFQISKSFESLGSTINVRCAVIVGGMDMVSQSIALGKKPHIIVATPGRLLDHLENTKGFSLRTLKYLVMDEADRLLDMDFGPLLDKILKVLPRERRTFLFSATMSSKVESLQRASLSNPLRVSVSSNKYQTVSTLLQSYLFLPHKHKDIYLVYLLNEFVGQSTIIFTRTVHETQRISFLLRSLGFGAIPLHGQLSQSARLGALGKFRSRSRDILVATDVAARGLDIPSVDVVLNFDLPTDSKTYVHRVGRTARAGKSGVAISFVTQYDVEIWLRIEGALGKKLKEYELEKDEVMVLAERVGEAQRQAIMEMKNFDEKRGTKAKKFGKGKRSRDEMDQEEG.

The segment at 1–52 (MRDVKKRKIAHEAPEHGSDTESTSSHKSVAQQDDPLETQDEATATESRPAPK) is disordered. The segment covering 10-19 (AHEAPEHGSD) has biased composition (basic and acidic residues). Positions 20–31 (TESTSSHKSVAQ) are enriched in polar residues. Residues 52–80 (KSFKDLGIIDQLCEACETMGYKAPTPIQA) carry the Q motif motif. The Helicase ATP-binding domain occupies 83-254 (IPLALQGRDL…RASLSNPLRV (172 aa)). Residue 96–103 (AETGSGKT) coordinates ATP. Positions 202–205 (DEAD) match the DEAD box motif. The 145-residue stretch at 282–426 (YLVYLLNEFV…EYELEKDEVM (145 aa)) folds into the Helicase C-terminal domain. Residues 444–472 (KNFDEKRGTKAKKFGKGKRSRDEMDQEEG) form a disordered region. Positions 452–462 (TKAKKFGKGKR) are enriched in basic residues.

Belongs to the DEAD box helicase family. DDX47/RRP3 subfamily. As to quaternary structure, interacts with the SSU processome.

Its subcellular location is the nucleus. It carries out the reaction ATP + H2O = ADP + phosphate + H(+). Functionally, ATP-dependent rRNA helicase required for pre-ribosomal RNA processing. Involved in the maturation of the 35S-pre-rRNA and to its cleavage to mature 18S rRNA. In Aspergillus fumigatus (strain ATCC MYA-4609 / CBS 101355 / FGSC A1100 / Af293) (Neosartorya fumigata), this protein is ATP-dependent rRNA helicase rrp3.